Here is a 468-residue protein sequence, read N- to C-terminus: Glutamate--tRNA ligase (468 aa).

The 'HIGH' region signature appears at 8–18; sequence PSPTGFLHVGG. The Zn(2+) site is built by cysteine 97, cysteine 99, cysteine 124, and aspartate 126. Positions 236 to 240 match the 'KMSKS' region motif; that stretch reads KLSKR. Residue lysine 239 coordinates ATP.

It belongs to the class-I aminoacyl-tRNA synthetase family. Glutamate--tRNA ligase type 1 subfamily. In terms of assembly, monomer. Zn(2+) is required as a cofactor.

Its subcellular location is the cytoplasm. The enzyme catalyses tRNA(Glu) + L-glutamate + ATP = L-glutamyl-tRNA(Glu) + AMP + diphosphate. Its function is as follows. Catalyzes the attachment of glutamate to tRNA(Glu) in a two-step reaction: glutamate is first activated by ATP to form Glu-AMP and then transferred to the acceptor end of tRNA(Glu). The sequence is that of Glutamate--tRNA ligase from Francisella tularensis subsp. mediasiatica (strain FSC147).